The chain runs to 265 residues: 3-methyl-2-oxobutanoate hydroxymethyltransferase (265 aa).

Positions 46 and 85 each coordinate Mg(2+). 3-methyl-2-oxobutanoate is bound by residues 46–47 (DS), Asp-85, and Lys-114. Mg(2+) is bound at residue Glu-116. The active-site Proton acceptor is Glu-183.

The protein belongs to the PanB family. As to quaternary structure, homodecamer; pentamer of dimers. The cofactor is Mg(2+).

It localises to the cytoplasm. It carries out the reaction 3-methyl-2-oxobutanoate + (6R)-5,10-methylene-5,6,7,8-tetrahydrofolate + H2O = 2-dehydropantoate + (6S)-5,6,7,8-tetrahydrofolate. The protein operates within cofactor biosynthesis; coenzyme A biosynthesis. In terms of biological role, catalyzes the reversible reaction in which hydroxymethyl group from 5,10-methylenetetrahydrofolate is transferred onto alpha-ketoisovalerate to form ketopantoate. This Caldivirga maquilingensis (strain ATCC 700844 / DSM 13496 / JCM 10307 / IC-167) protein is 3-methyl-2-oxobutanoate hydroxymethyltransferase.